We begin with the raw amino-acid sequence, 442 residues long: tRNA-2-methylthio-N(6)-dimethylallyladenosine synthase (442 aa).

The MTTase N-terminal domain occupies 2 to 117; that stretch reads KSLYIKTYGC…LPELIVKASR (116 aa). Residues cysteine 11, cysteine 47, cysteine 80, cysteine 157, cysteine 161, and cysteine 164 each contribute to the [4Fe-4S] cluster site. The Radical SAM core domain maps to 143–374; that stretch reads NSQGSSAFLS…QKLINKQQLE (232 aa). One can recognise a TRAM domain in the interval 377–441; that stretch reads QSMVGKTIPV…QNSLLGRELQ (65 aa).

Belongs to the methylthiotransferase family. MiaB subfamily. As to quaternary structure, monomer. [4Fe-4S] cluster is required as a cofactor.

It localises to the cytoplasm. It catalyses the reaction N(6)-dimethylallyladenosine(37) in tRNA + (sulfur carrier)-SH + AH2 + 2 S-adenosyl-L-methionine = 2-methylsulfanyl-N(6)-dimethylallyladenosine(37) in tRNA + (sulfur carrier)-H + 5'-deoxyadenosine + L-methionine + A + S-adenosyl-L-homocysteine + 2 H(+). Functionally, catalyzes the methylthiolation of N6-(dimethylallyl)adenosine (i(6)A), leading to the formation of 2-methylthio-N6-(dimethylallyl)adenosine (ms(2)i(6)A) at position 37 in tRNAs that read codons beginning with uridine. This is tRNA-2-methylthio-N(6)-dimethylallyladenosine synthase from Wolbachia sp. subsp. Brugia malayi (strain TRS).